The following is a 374-amino-acid chain: Glutamate 5-kinase (374 aa).

Lysine 16 contributes to the ATP binding site. Residues serine 56, aspartate 143, and asparagine 155 each coordinate substrate. Residue 175–176 coordinates ATP; sequence TD. Residues 282-360 form the PUA domain; the sequence is KGCFVVDEGA…TRIEEILGYV (79 aa).

Belongs to the glutamate 5-kinase family.

The protein resides in the cytoplasm. It carries out the reaction L-glutamate + ATP = L-glutamyl 5-phosphate + ADP. It participates in amino-acid biosynthesis; L-proline biosynthesis; L-glutamate 5-semialdehyde from L-glutamate: step 1/2. Its function is as follows. Catalyzes the transfer of a phosphate group to glutamate to form L-glutamate 5-phosphate. The protein is Glutamate 5-kinase of Methylococcus capsulatus (strain ATCC 33009 / NCIMB 11132 / Bath).